The primary structure comprises 117 residues: UPF0231 protein HI_1724 (117 aa).

It belongs to the UPF0231 family.

This is UPF0231 protein HI_1724 from Haemophilus influenzae (strain ATCC 51907 / DSM 11121 / KW20 / Rd).